We begin with the raw amino-acid sequence, 221 residues long: Phosphoglycolate phosphatase (221 aa).

Aspartate 10 functions as the Nucleophile in the catalytic mechanism. Mg(2+)-binding residues include aspartate 10, aspartate 12, and aspartate 168.

This sequence belongs to the HAD-like hydrolase superfamily. CbbY/CbbZ/Gph/YieH family. It depends on Mg(2+) as a cofactor.

The catalysed reaction is 2-phosphoglycolate + H2O = glycolate + phosphate. It functions in the pathway organic acid metabolism; glycolate biosynthesis; glycolate from 2-phosphoglycolate: step 1/1. Functionally, specifically catalyzes the dephosphorylation of 2-phosphoglycolate. Is involved in the dissimilation of the intracellular 2-phosphoglycolate formed during the DNA repair of 3'-phosphoglycolate ends, a major class of DNA lesions induced by oxidative stress. This Xanthomonas campestris pv. campestris (strain 8004) protein is Phosphoglycolate phosphatase.